Consider the following 450-residue polypeptide: Phosphoglucosamine mutase (450 aa).

Ser107 serves as the catalytic Phosphoserine intermediate. Mg(2+) is bound by residues Ser107, Asp246, Asp248, and Asp250. Position 107 is a phosphoserine (Ser107).

The protein belongs to the phosphohexose mutase family. Requires Mg(2+) as cofactor. Activated by phosphorylation.

It carries out the reaction alpha-D-glucosamine 1-phosphate = D-glucosamine 6-phosphate. Functionally, catalyzes the conversion of glucosamine-6-phosphate to glucosamine-1-phosphate. In Dechloromonas aromatica (strain RCB), this protein is Phosphoglucosamine mutase.